The sequence spans 258 residues: 5'-nucleotidase SurE (258 aa).

Residues Asp-9, Asp-10, Ser-42, and Asn-95 each coordinate a divalent metal cation.

This sequence belongs to the SurE nucleotidase family. It depends on a divalent metal cation as a cofactor.

It is found in the cytoplasm. The catalysed reaction is a ribonucleoside 5'-phosphate + H2O = a ribonucleoside + phosphate. Functionally, nucleotidase that shows phosphatase activity on nucleoside 5'-monophosphates. In Campylobacter concisus (strain 13826), this protein is 5'-nucleotidase SurE.